Reading from the N-terminus, the 165-residue chain is Thiol peroxidase (165 aa).

Positions 18-165 (PQKGAQAPAF…PNYAAALAAL (148 aa)) constitute a Thioredoxin domain. Cys60 acts as the Cysteine sulfenic acid (-SOH) intermediate in catalysis. Cys60 and Cys94 are joined by a disulfide.

It belongs to the peroxiredoxin family. Tpx subfamily. In terms of assembly, homodimer.

The catalysed reaction is a hydroperoxide + [thioredoxin]-dithiol = an alcohol + [thioredoxin]-disulfide + H2O. Its function is as follows. Thiol-specific peroxidase that catalyzes the reduction of hydrogen peroxide and organic hydroperoxides to water and alcohols, respectively. Plays a role in cell protection against oxidative stress by detoxifying peroxides. The chain is Thiol peroxidase from Pseudomonas aeruginosa (strain ATCC 15692 / DSM 22644 / CIP 104116 / JCM 14847 / LMG 12228 / 1C / PRS 101 / PAO1).